The primary structure comprises 86 residues: Acyl carrier protein (86 aa).

Positions 2-82 (ATVFERVKKV…AVVDYLKSKG (81 aa)) constitute a Carrier domain. Residue serine 37 is modified to O-(pantetheine 4'-phosphoryl)serine.

The protein belongs to the acyl carrier protein (ACP) family. 4'-phosphopantetheine is transferred from CoA to a specific serine of apo-ACP by AcpS. This modification is essential for activity because fatty acids are bound in thioester linkage to the sulfhydryl of the prosthetic group.

It localises to the cytoplasm. The protein operates within lipid metabolism; fatty acid biosynthesis. Carrier of the growing fatty acid chain in fatty acid biosynthesis. This Dehalococcoides mccartyi (strain ATCC BAA-2266 / KCTC 15142 / 195) (Dehalococcoides ethenogenes (strain 195)) protein is Acyl carrier protein.